Consider the following 162-residue polypeptide: UPF0262 protein AZC_3148 (162 aa).

It belongs to the UPF0262 family.

The protein is UPF0262 protein AZC_3148 of Azorhizobium caulinodans (strain ATCC 43989 / DSM 5975 / JCM 20966 / LMG 6465 / NBRC 14845 / NCIMB 13405 / ORS 571).